The primary structure comprises 374 residues: MKRQRVVVKIGSSSLTDPKGGLCHDKLFDHVEAIAYLKQLGHDVILITSGAVAAGFGPLGYPARPTTIAGKQAAAAVGQSLLMQAYSSAFAQFGFTAAQLLLTRSDFYSRERFRNLFATITTLLENGAVPIINENDSVSIEELTFGDNDMLSALVAGFLHADALILLTDINGLYDANPKTNPQAKKYAFLPEITDEMIEAAGGIGSAVGTGGMRSKLLAARKALSFGVSVFIGTGSGREKLADILAGKGDGTYIGVPFPKQMQMRKQWIAYHAPVAGMITVDSGAEEALLMRGKSLLPAGVTAVSGDFHAMDVVDVVNEKGITIGRGQVYYAAADLKKVKGRPSEEARQYSYLHRPEVIHRDNWVTLRKESVSK.

Lys-9 serves as a coordination point for ATP. Residues Ser-49, Asp-136, and Asn-148 each contribute to the substrate site. ATP-binding positions include 168–169 (TD) and 210–216 (TGGMRSK). The 79-residue stretch at 276–354 (AGMITVDSGA…EEARQYSYLH (79 aa)) folds into the PUA domain.

It belongs to the glutamate 5-kinase family.

Its subcellular location is the cytoplasm. It carries out the reaction L-glutamate + ATP = L-glutamyl 5-phosphate + ADP. Its pathway is amino-acid biosynthesis; L-proline biosynthesis; L-glutamate 5-semialdehyde from L-glutamate: step 1/2. Catalyzes the transfer of a phosphate group to glutamate to form L-glutamate 5-phosphate. This is Glutamate 5-kinase from Geobacillus kaustophilus (strain HTA426).